Here is a 132-residue protein sequence, read N- to C-terminus: NADH-quinone oxidoreductase subunit I 1 (132 aa).

4Fe-4S ferredoxin-type domains are found at residues 42–71 and 81–110; these read LKVS…VEAG and ERYE…MTGQ. Positions 51, 54, 57, 61, 90, 93, 96, and 100 each coordinate [4Fe-4S] cluster.

The protein belongs to the complex I 23 kDa subunit family. NDH-1 is composed of 14 different subunits. Subunits NuoA, H, J, K, L, M, N constitute the membrane sector of the complex. Requires [4Fe-4S] cluster as cofactor.

The protein localises to the cell inner membrane. It catalyses the reaction a quinone + NADH + 5 H(+)(in) = a quinol + NAD(+) + 4 H(+)(out). Functionally, NDH-1 shuttles electrons from NADH, via FMN and iron-sulfur (Fe-S) centers, to quinones in the respiratory chain. The immediate electron acceptor for the enzyme in this species is believed to be ubiquinone. Couples the redox reaction to proton translocation (for every two electrons transferred, four hydrogen ions are translocated across the cytoplasmic membrane), and thus conserves the redox energy in a proton gradient. This is NADH-quinone oxidoreductase subunit I 1 from Geobacter sulfurreducens (strain ATCC 51573 / DSM 12127 / PCA).